The following is a 397-amino-acid chain: UDP-GlcNAc:betaGal beta-1,3-N-acetylglucosaminyltransferase 8 (397 aa).

Residues 1–6 (MRCPKC) lie on the Cytoplasmic side of the membrane. Residues 7 to 23 (LLCLSALLTLLGLKVYI) form a helical; Signal-anchor for type II membrane protein membrane-spanning segment. The Lumenal segment spans residues 24 to 397 (EWTSESRLSK…KQLQDPRLQC (374 aa)). A disordered region spans residues 33–58 (KAYPSPRGTPPSPTPANPEPTLPANL). The span at 39–53 (RGTPPSPTPANPEPT) shows a compositional bias: pro residues. Residue Asn57 is glycosylated (N-linked (GlcNAc...) asparagine).

It belongs to the glycosyltransferase 31 family. In terms of assembly, interacts with B3GNT2; this interaction greatly increases B3GNT2 catalytic activity, independently of B3GNT8 enzymatic activity. As to expression, highly expressed in small intestine, pancreas, spleen, bone marrow, lung, throat, and ileum, and weakly in fetal brain, cerebellum, heart, liver, tongue, breast, uteri, and testis. Not detected in colon. Differentially expressed in human tumor cell lines.

It localises to the golgi apparatus membrane. The protein operates within protein modification; protein glycosylation. Functionally, beta-1,3-N-acetylglucosaminyltransferase that plays a role in the elongation of specific branch structures of multiantennary N-glycans. Has strong activity towards tetraantennary N-glycans and 2,6 triantennary glycans. This chain is UDP-GlcNAc:betaGal beta-1,3-N-acetylglucosaminyltransferase 8, found in Homo sapiens (Human).